We begin with the raw amino-acid sequence, 735 residues long: F-box and leucine-rich repeat protein 13 (735 aa).

In terms of domain architecture, F-box spans 152–198 (KCDISLLPERAILQIFFYLSLKDVIICGQVNHAWMLMTQLNSLWNAI). 17 LRR repeats span residues 230–254 (GCLL…NVSD), 255–280 (CPTF…NLSN), 281–305 (TTIT…SLAY), 306–333 (CRRF…DLSG), 334–359 (CTQI…TIND), 360–385 (MPTL…VFTG), 386–406 (APHI…RKIR), 410–435 (NKRV…YMAD), 436–460 (CKGI…NLAN), 461–488 (CVRI…NLSN), 489–514 (CVRL…SLRN), 515–538 (CEHL…IDLS), 539–563 (GTDI…SVSE), 564–589 (CYRI…DVSY), 590–615 (CSQL…SIAG), 616–641 (CPKI…DISG), and 642–667 (CVLL…KMQY). The segment covering 682–692 (KVQQQEYNTND) has biased composition (polar residues). The tract at residues 682 to 703 (KVQQQEYNTNDPPRWFGYDREG) is disordered.

This sequence belongs to the DRC6 family. Component of the nexin-dynein regulatory complex (N-DRC). Directly interacts with SKP1 and CUL1. Interacts with TCTE1/DRC5.

The protein localises to the cytoplasm. It localises to the cytoskeleton. It is found in the flagellum axoneme. Its subcellular location is the microtubule organizing center. The protein resides in the centrosome. Substrate-recognition component of the SCF (SKP1-CUL1-F-box protein)-type E3 ubiquitin ligase complex. Component of the nexin-dynein regulatory complex (N-DRC), a key regulator of ciliary/flagellar motility which maintains the alignment and integrity of the distal axoneme and regulates microtubule sliding in motile axonemes. Specifically targets CEP192 isoform 3 for ubiquitin-mediated proteolysis and thereby acts as a regulator of microtubule nucleation activity. This Homo sapiens (Human) protein is F-box and leucine-rich repeat protein 13 (FBXL13).